A 258-amino-acid polypeptide reads, in one-letter code: Deoxyribose-phosphate aldolase (258 aa).

D102 acts as the Proton donor/acceptor in catalysis. The active-site Schiff-base intermediate with acetaldehyde is the K165. K199 (proton donor/acceptor) is an active-site residue.

Belongs to the DeoC/FbaB aldolase family. DeoC type 2 subfamily.

The protein localises to the cytoplasm. It carries out the reaction 2-deoxy-D-ribose 5-phosphate = D-glyceraldehyde 3-phosphate + acetaldehyde. It functions in the pathway carbohydrate degradation; 2-deoxy-D-ribose 1-phosphate degradation; D-glyceraldehyde 3-phosphate and acetaldehyde from 2-deoxy-alpha-D-ribose 1-phosphate: step 2/2. Its function is as follows. Catalyzes a reversible aldol reaction between acetaldehyde and D-glyceraldehyde 3-phosphate to generate 2-deoxy-D-ribose 5-phosphate. The protein is Deoxyribose-phosphate aldolase of Aliivibrio salmonicida (strain LFI1238) (Vibrio salmonicida (strain LFI1238)).